Here is a 404-residue protein sequence, read N- to C-terminus: Cytochrome b561 and DOMON domain-containing protein At5g35735 (404 aa).

The N-terminal stretch at 1–25 (MDRTQSPKTALFAVLATLLVLTVNG) is a signal peptide. A DOMON domain is found at 49-164 (LGSFLHWTYN…ITANQLWQVG (116 aa)). The region spanning 170-369 (VPASHQTSGD…LEPLTWFIVL (200 aa)) is the Cytochrome b561 domain. Positions 172–207 (ASHQTSGDNMRSSGRIDFRTGQASAGGGGSGDRLRK) are disordered. A compositionally biased stretch (polar residues) spans 173–183 (SHQTSGDNMRS). 2 helical membrane passes run 210–230 (THGV…AMMA) and 241–261 (WFYL…AGWA). His211, His245, and His278 together coordinate heme b. Residues 280-300 (NLGIALFTFATLQVFALLVRP) traverse the membrane as a helical segment. His314 contacts heme b. Helical transmembrane passes span 316-336 (TVGY…FDIL) and 349-369 (ILIF…FIVL). Residues 376–404 (GNTVAAPTSSKYSNGVNGTTTTGPHHQDA) form a disordered region. A compositionally biased stretch (polar residues) spans 380–404 (AAPTSSKYSNGVNGTTTTGPHHQDA).

Requires heme b as cofactor.

It is found in the membrane. May act as a catecholamine-responsive trans-membrane electron transporter. This chain is Cytochrome b561 and DOMON domain-containing protein At5g35735, found in Arabidopsis thaliana (Mouse-ear cress).